Reading from the N-terminus, the 170-residue chain is Cathelicidin antimicrobial peptide (170 aa).

An N-terminal signal peptide occupies residues 1–30; the sequence is MKTQRDGHSLGRWSLVLLLLGLVMPLAIIA. Positions 31-131 are cleaved as a propeptide — cathelin-like domain (CLD); the sequence is QVLSYKEAVL…DISCDKDNKR (101 aa). 2 cysteine pairs are disulfide-bonded: cysteine 86–cysteine 97 and cysteine 108–cysteine 125. Residues 150–162 are active core; that stretch reads FKRIVQRIKDFLR.

The protein belongs to the cathelicidin family. In terms of assembly, monomer, homodimer or homotrimer (in vitro). Oligomerizes as tetra- or hexamer in solution (in vitro). The N-terminus is blocked. In terms of processing, proteolytically cleaved by proteinase PRTN3 into antibacterial peptide LL-37. Proteolytically cleaved by cathepsin CTSG and neutrophil elastase ELANE. Post-translationally, resistant to proteolytic degradation in solution, and when bound to both zwitterionic (mimicking mammalian membranes) and negatively charged membranes (mimicking bacterial membranes). After secretion onto the skin surface, the CAMP gene product is processed by a serine protease-dependent mechanism into multiple novel antimicrobial peptides distinct from and shorter than cathelicidin LL-37, such as peptides KR-20 (residues 151-170), LL-23 (residues 134-156), LL-29 (residues 134-162), KS-30 (residues 141-170), RK-31 (residues 140-170) and FF-33 (residues 138-170). The peptides act synergistically, killing bacteria at lower concentrations when present together, and maintain activity at increased salt condition. As to expression, expressed in neutrophilic granulocytes (at protein level). Expressed in bone marrow. Expressed in granulocytes (at protein level). Expressed by the eccrine apparatus and secreted into sweat on skin (at protein level). In terms of tissue distribution, expressed in bone marrow and testis.

It is found in the secreted. Its subcellular location is the vesicle. In terms of biological role, antimicrobial protein that is an integral component of the innate immune system. Binds to bacterial lipopolysaccharides (LPS). Acts via neutrophil N-formyl peptide receptors to enhance the release of CXCL2. Postsecretory processing generates multiple cathelicidin antimicrobial peptides with various lengths which act as a topical antimicrobial defense in sweat on skin. The unprocessed precursor form, cathelicidin antimicrobial peptide, inhibits the growth of Gram-negative E.coli and E.aerogenes with efficiencies comparable to that of the mature peptide LL-37 (in vitro). Functionally, antimicrobial peptide that is an integral component of the innate immune system. Binds to bacterial lipopolysaccharides (LPS). Causes membrane permeabilization by forming transmembrane pores (in vitro). Causes lysis of E.coli. Exhibits antimicrobial activity against Gram-negative bacteria such as P.aeruginosa, S.typhimurium, E.aerogenes, E.coli and P.syringae, Gram-positive bacteria such as L.monocytogenes, S.epidermidis, S.pyogenes and S.aureus, as well as vancomycin-resistant enterococci (in vitro). Exhibits antimicrobial activity against methicillin-resistant S.aureus, P.mirabilis, and C.albicans in low-salt media, but not in media containing 100 mM NaCl (in vitro). Forms chiral supramolecular assemblies with quinolone signal (PQS) molecules of P.aeruginosa, which may lead to interference of bacterial quorum signaling and perturbance of bacterial biofilm formation. May form supramolecular fiber-like assemblies on bacterial membranes. Induces cytokine and chemokine production as well as TNF/TNFA and CSF2/GMCSF production in normal human keratinocytes. Exhibits hemolytic activity against red blood cells. Its function is as follows. Exhibits antimicrobial activity against E.coli and B.megaterium (in vitro). Acts synergistically with peptides KS-30 and KR-31, killing bacteria such as S.aureus, E.coli and C.albicans at lower concentrations when present together, and maintains activity at increased salt condition. Does not have the ability to stimulate CXCL8/IL8 release from keratinocytes. In terms of biological role, poorly active (MIC &gt; 150 uM) against E.coli strain K12. Is able to induce the pro-inflammatory cytokine TNF/TNFA or the chemokine CCL2/MCP1. Functionally, moderately antibacterial. Its function is as follows. Moderately antibacterial. Acts synergistically with peptides KR-20 and KR-31, killing bacteria such as S.aureus, E.coli and C.albicans at lower concentrations when present together, and maintain activity at increased salt condition. Does not have the ability to stimulate CXCL8/IL8 release from keratinocytes. Acts synergistically with peptides KS-30 and KR-31, killing bacteria such as S.aureus, E.coli and C.albicans at lower concentrations when present together, and maintain activity at increased salt condition. Does not have the ability to stimulate CXCL8/IL8 release from keratinocytes. In terms of biological role, inhibits the growth of E.coli and B.megaterium and exhibits hemolytic activity against human red blood cells. The sequence is that of Cathelicidin antimicrobial peptide from Homo sapiens (Human).